A 131-amino-acid chain; its full sequence is MNWLDEINWNADGLVPAIAQDHKTGRVLMMAWMNREALQLTAQENRAIYWSRSRGKLWRKGEESGHVQQLHELRLDCDADVIILMVEQIGGIACHTGRESCFYRVFENGAWKVVEPVLKDPHAIYAEHKHE.

Residue Asp-76 coordinates Mg(2+). Residue Cys-77 participates in Zn(2+) binding. 2 residues coordinate Mg(2+): Asp-78 and Asp-80. Positions 94 and 101 each coordinate Zn(2+).

It belongs to the PRA-CH family. Homodimer. It depends on Mg(2+) as a cofactor. The cofactor is Zn(2+).

Its subcellular location is the cytoplasm. The catalysed reaction is 1-(5-phospho-beta-D-ribosyl)-5'-AMP + H2O = 1-(5-phospho-beta-D-ribosyl)-5-[(5-phospho-beta-D-ribosylamino)methylideneamino]imidazole-4-carboxamide. Its pathway is amino-acid biosynthesis; L-histidine biosynthesis; L-histidine from 5-phospho-alpha-D-ribose 1-diphosphate: step 3/9. Catalyzes the hydrolysis of the adenine ring of phosphoribosyl-AMP. The sequence is that of Phosphoribosyl-AMP cyclohydrolase from Stutzerimonas stutzeri (strain A1501) (Pseudomonas stutzeri).